A 476-amino-acid polypeptide reads, in one-letter code: Bifunctional protein HldE (476 aa).

The ribokinase stretch occupies residues 1–318 (MKPILPDYNN…AEAIHGSRDT (318 aa)). An ATP-binding site is contributed by 195–198 (NMSE). Asp264 is an active-site residue. The segment at 344–476 (MTNGCFDILH…IIDAIKGGRG (133 aa)) is cytidylyltransferase.

The protein in the N-terminal section; belongs to the carbohydrate kinase PfkB family. This sequence in the C-terminal section; belongs to the cytidylyltransferase family. In terms of assembly, homodimer.

It catalyses the reaction D-glycero-beta-D-manno-heptose 7-phosphate + ATP = D-glycero-beta-D-manno-heptose 1,7-bisphosphate + ADP + H(+). The catalysed reaction is D-glycero-beta-D-manno-heptose 1-phosphate + ATP + H(+) = ADP-D-glycero-beta-D-manno-heptose + diphosphate. Its pathway is nucleotide-sugar biosynthesis; ADP-L-glycero-beta-D-manno-heptose biosynthesis; ADP-L-glycero-beta-D-manno-heptose from D-glycero-beta-D-manno-heptose 7-phosphate: step 1/4. The protein operates within nucleotide-sugar biosynthesis; ADP-L-glycero-beta-D-manno-heptose biosynthesis; ADP-L-glycero-beta-D-manno-heptose from D-glycero-beta-D-manno-heptose 7-phosphate: step 3/4. It participates in bacterial outer membrane biogenesis; LPS core biosynthesis. Its function is as follows. Catalyzes the phosphorylation of D-glycero-D-manno-heptose 7-phosphate at the C-1 position to selectively form D-glycero-beta-D-manno-heptose-1,7-bisphosphate. Functionally, catalyzes the ADP transfer from ATP to D-glycero-beta-D-manno-heptose 1-phosphate, yielding ADP-D-glycero-beta-D-manno-heptose. The sequence is that of Bifunctional protein HldE from Vibrio vulnificus (strain YJ016).